We begin with the raw amino-acid sequence, 752 residues long: Primary amine oxidase (752 aa).

The first 27 residues, 1–27 (MAILSPRKTALALAVALSCAWQSPAFA), serve as a signal peptide directing secretion. Substrate contacts are provided by residues 408 to 419 (YLDSGDYGMGTL) and 490 to 495 (VGNYDY). Asp410 acts as the Proton acceptor in catalysis. Residue Tyr493 is the Schiff-base intermediate with substrate; via topaquinone of the active site. Tyr493 carries the 2',4',5'-topaquinone modification. Cu cation contacts are provided by His551 and His553. Ca(2+) is bound by residues Asp560, Leu561, Asp562, Glu600, Tyr694, Asp697, Glu699, and Asp705. Asp560 provides a ligand contact to Mn(2+). Mn(2+) is bound at residue Asp562. Asp705 is a binding site for Mn(2+). Cu cation is bound at residue His716.

This sequence belongs to the copper/topaquinone oxidase family. Homodimer. It depends on Cu cation as a cofactor. Requires Ca(2+) as cofactor. L-topaquinone serves as cofactor. The cofactor is Mn(2+). Post-translationally, topaquinone (TPQ) is generated by copper-dependent autoxidation of a specific tyrosyl residue.

The protein resides in the periplasm. The catalysed reaction is a primary methyl amine + O2 + H2O = an aldehyde + H2O2 + NH4(+). Functionally, active on tyramine, tryptamine, beta-phenethylamine and dopamine. This chain is Primary amine oxidase (maoA), found in Klebsiella michiganensis (strain ATCC 8724 / DSM 4798 / JCM 20051 / NBRC 3318 / NRRL B-199 / KCTC 1686 / BUCSAV 143 / CCM 1901).